A 98-amino-acid polypeptide reads, in one-letter code: U10-barytoxin-Tl1a (98 aa).

The first 21 residues, 1-21 (MKTLVLVAVLGVASLYLLSSA), serve as a signal peptide directing secretion. A propeptide spanning residues 22–50 (SEVQQLSPAEEEFRAFVSTFGGLFETEER) is cleaved from the precursor. Intrachain disulfides connect Cys-57–Cys-71, Cys-64–Cys-76, and Cys-70–Cys-89.

It belongs to the neurotoxin 10 (Hwtx-1) family. 27 (ICK-3) subfamily. In terms of tissue distribution, expressed by the venom gland.

The protein localises to the secreted. Ion channel inhibitor. The protein is U10-barytoxin-Tl1a of Trittame loki (Brush-footed trapdoor spider).